The sequence spans 517 residues: Ribonuclease Y (517 aa).

Residues 1–21 (MIESLIALIAAIVGLGIGYLV) form a helical membrane-spanning segment. Residues 207–273 (LINVINIKND…TKVIELLVED (67 aa)) enclose the KH domain. In terms of domain architecture, HD spans 333–426 (ALAHSLEVAH…VCAADTLSAA (94 aa)).

Belongs to the RNase Y family.

The protein localises to the cell membrane. Endoribonuclease that initiates mRNA decay. The chain is Ribonuclease Y from Campylobacter jejuni subsp. doylei (strain ATCC BAA-1458 / RM4099 / 269.97).